A 1027-amino-acid chain; its full sequence is Presequence protease, mitochondrial (1027 aa).

The N-terminal 22 residues, 1–22, are a transit peptide targeting the mitochondrion; sequence MIRQCRAGLRLCRALYQTSYRW. Histidine 98 serves as a coordination point for Zn(2+). Glutamate 101 acts as the Proton acceptor in catalysis. Residues histidine 102 and glutamate 199 each contribute to the Zn(2+) site. Cysteine 113 and cysteine 550 are disulfide-bonded. Positions 800–829 are disordered; that stretch reads KKERKSIRPHVVEKSSSPSSSGSEISRRAT. The span at 814 to 823 shows a compositional bias: low complexity; sequence SSSPSSSGSE.

It belongs to the peptidase M16 family. PreP subfamily. In terms of assembly, monomer and homodimer; homodimerization is induced by binding of the substrate. The cofactor is Zn(2+). In terms of processing, a disulfide bond locks the enzyme in the closed conformation preventing substrate entry into the catalytic chamber.

Its subcellular location is the mitochondrion matrix. With respect to regulation, mainly exists in a closed and catalytically competent conformation but a closed-to-open switch allows substrate entry into the catalytic chamber. Substrate binding induces closure and dimerization. A disulfide bond may lock the enzyme in a closed conformation preventing substrate entry into the catalytic chamber, participating in redox regulation of the enzyme. Inhibited by metal-chelating agents. Inhibited by nickel and zinc excess, and slightly activated by manganese. In terms of biological role, metalloendopeptidase of the mitochondrial matrix that functions in peptide cleavage and degradation rather than in protein processing. Has an ATP-independent activity. Specifically cleaves peptides in the range of 5 to 65 residues. Shows a preference for cleavage after small polar residues and before basic residues, but without any positional preference. Degrades the transit peptides of mitochondrial proteins after their cleavage. Also degrades other unstructured peptides. This Xenopus tropicalis (Western clawed frog) protein is Presequence protease, mitochondrial (pitrm1).